A 422-amino-acid polypeptide reads, in one-letter code: Probable D-serine dehydratase (422 aa).

Lysine 105 carries the post-translational modification N6-(pyridoxal phosphate)lysine.

Belongs to the serine/threonine dehydratase family. DsdA subfamily. It depends on pyridoxal 5'-phosphate as a cofactor.

The enzyme catalyses D-serine = pyruvate + NH4(+). The chain is Probable D-serine dehydratase from Carboxydothermus hydrogenoformans (strain ATCC BAA-161 / DSM 6008 / Z-2901).